We begin with the raw amino-acid sequence, 312 residues long: MAYSNQSRVTEFIISGLTNKPELQLPLFLLFLGIYLFTVLGNLGMIILILLSSHLHTPMYFFLSSLSFIDLCYSTIITPKMLVNFVTTKNVISYQECMTQLYFFIAFVISECHMLAAMAYDRYVAICNPLLYNVTMSYQVCSWMVGGVYGMGFIGAAIHTFCMLRVVFCKDNIINHYFCDLFPLMELACSSTYVNEVVLLSLSAFNIFIPTLTILGSYIFIIISILRIKSTEGRFKAFSTCSSHFSAVSVFFGSLAFMYLQPFSVSSKDKGKVSSVFYTTIVPMLNPMIYSLRNRDVKLALNKLFQKKKFHV.

Residues 1-28 (MAYSNQSRVTEFIISGLTNKPELQLPLF) lie on the Extracellular side of the membrane. N-linked (GlcNAc...) asparagine glycosylation is present at Asn-5. A helical transmembrane segment spans residues 29 to 49 (LLFLGIYLFTVLGNLGMIILI). Over 50 to 56 (LLSSHLH) the chain is Cytoplasmic. A helical transmembrane segment spans residues 57-77 (TPMYFFLSSLSFIDLCYSTII). The Extracellular segment spans residues 78–99 (TPKMLVNFVTTKNVISYQECMT). Cysteines 97 and 189 form a disulfide. Residues 100–120 (QLYFFIAFVISECHMLAAMAY) form a helical membrane-spanning segment. At 121 to 143 (DRYVAICNPLLYNVTMSYQVCSW) the chain is on the cytoplasmic side. A helical membrane pass occupies residues 144–164 (MVGGVYGMGFIGAAIHTFCML). The Extracellular portion of the chain corresponds to 165–204 (RVVFCKDNIINHYFCDLFPLMELACSSTYVNEVVLLSLSA). Residues 205–225 (FNIFIPTLTILGSYIFIIISI) form a helical membrane-spanning segment. Residues 226–244 (LRIKSTEGRFKAFSTCSSH) lie on the Cytoplasmic side of the membrane. Residues 245–265 (FSAVSVFFGSLAFMYLQPFSV) traverse the membrane as a helical segment. Over 266–274 (SSKDKGKVS) the chain is Extracellular. The chain crosses the membrane as a helical span at residues 275–292 (SVFYTTIVPMLNPMIYSL). Residues 293 to 312 (RNRDVKLALNKLFQKKKFHV) are Cytoplasmic-facing.

The protein belongs to the G-protein coupled receptor 1 family.

The protein localises to the cell membrane. Odorant receptor. The chain is Olfactory receptor 8G50 from Mus musculus (Mouse).